The sequence spans 1051 residues: DNA-directed RNA polymerase subunit beta (1051 aa).

Belongs to the RNA polymerase beta chain family. In plastids the minimal PEP RNA polymerase catalytic core is composed of four subunits: alpha, beta, beta', and beta''. When a (nuclear-encoded) sigma factor is associated with the core the holoenzyme is formed, which can initiate transcription (Potential).

Its subcellular location is the plastid. The protein localises to the apicoplast. It catalyses the reaction RNA(n) + a ribonucleoside 5'-triphosphate = RNA(n+1) + diphosphate. In terms of biological role, DNA-dependent RNA polymerase catalyzes the transcription of DNA into RNA using the four ribonucleoside triphosphates as substrates. The sequence is that of DNA-directed RNA polymerase subunit beta (rpoB) from Toxoplasma gondii.